Reading from the N-terminus, the 1024-residue chain is Beta-galactosidase (1024 aa).

Residues N103 and D202 each coordinate substrate. D202 provides a ligand contact to Na(+). 3 residues coordinate Mg(2+): E417, H419, and E462. Substrate contacts are provided by residues E462 and 538–541; that span reads EYAH. E462 serves as the catalytic Proton donor. Catalysis depends on E538, which acts as the Nucleophile. N598 lines the Mg(2+) pocket. Na(+)-binding residues include F602 and N605. The substrate site is built by N605 and W1000.

Belongs to the glycosyl hydrolase 2 family. As to quaternary structure, homotetramer. The cofactor is Mg(2+). Requires Na(+) as cofactor.

It catalyses the reaction Hydrolysis of terminal non-reducing beta-D-galactose residues in beta-D-galactosides.. The sequence is that of Beta-galactosidase from Escherichia coli (strain SMS-3-5 / SECEC).